The chain runs to 201 residues: Histidinol dehydrogenase (201 aa).

This sequence belongs to the histidinol dehydrogenase family. As to quaternary structure, homodimer. It depends on Zn(2+) as a cofactor.

The catalysed reaction is L-histidinol + 2 NAD(+) + H2O = L-histidine + 2 NADH + 3 H(+). The protein operates within amino-acid biosynthesis; L-histidine biosynthesis; L-histidine from 5-phospho-alpha-D-ribose 1-diphosphate: step 9/9. Functionally, catalyzes the sequential NAD-dependent oxidations of L-histidinol to L-histidinaldehyde and then to L-histidine. The chain is Histidinol dehydrogenase (hisD) from Buchnera aphidicola subsp. Diuraphis noxia.